A 206-amino-acid polypeptide reads, in one-letter code: 3-isopropylmalate dehydratase small subunit (206 aa).

This sequence belongs to the LeuD family. LeuD type 1 subfamily. As to quaternary structure, heterodimer of LeuC and LeuD.

It carries out the reaction (2R,3S)-3-isopropylmalate = (2S)-2-isopropylmalate. It participates in amino-acid biosynthesis; L-leucine biosynthesis; L-leucine from 3-methyl-2-oxobutanoate: step 2/4. In terms of biological role, catalyzes the isomerization between 2-isopropylmalate and 3-isopropylmalate, via the formation of 2-isopropylmaleate. The polypeptide is 3-isopropylmalate dehydratase small subunit (Leptospira borgpetersenii serovar Hardjo-bovis (strain JB197)).